The following is a 283-amino-acid chain: Large ribosomal subunit protein uL2c (283 aa).

The segment at 229-274 (GVVMNPIDHPHGGGEGKVPIGRKKPLTPWGHPALGRKSRKRRKYSD) is disordered. Over residues 262–271 (LGRKSRKRRK) the composition is skewed to basic residues.

This sequence belongs to the universal ribosomal protein uL2 family. In terms of assembly, part of the 50S ribosomal subunit.

The protein localises to the plastid. This is Large ribosomal subunit protein uL2c (rpl2) from Aneura mirabilis (Parasitic liverwort).